We begin with the raw amino-acid sequence, 1209 residues long: Calcium-activated potassium channel subunit alpha-1 (1209 aa).

Gly residues predominate over residues 1 to 23; that stretch reads MANGGGGGGGSSGGGGGGGGGSG. Residues 1–61 form a disordered region; the sequence is MANGGGGGGG…SSSSSSSSSV (61 aa). The Extracellular segment spans residues 1 to 86; the sequence is MANGGGGGGG…VPCDSRGQRM (86 aa). A compositionally biased stretch (polar residues) spans 25–39; sequence RMSSNIHANNLSLDA. The segment covering 40 to 60 has biased composition (low complexity); that stretch reads SSSSSSSSSSSSSSSSSSSSS. The helical transmembrane segment at 87 to 107 threads the bilayer; that stretch reads WWAFLASSMVTFFGGLFIILL. Residues 108–178 lie on the Cytoplasmic side of the membrane; the sequence is WRTLKYLWTV…MISAQTLTGR (71 aa). Residues Cys-118, Cys-119, and Cys-121 are each lipidated (S-palmitoyl cysteine). A helical membrane pass occupies residues 179–199; it reads VLVVLVFALSIGALVIYFIDS. At 200–214 the chain is on the extracellular side; sequence SNPIESCQNFYKDFT. Residues 215–235 form a helical membrane-spanning segment; sequence LQIDMAFNVFFLLYFGLRFIA. Topologically, residues 236–239 are cytoplasmic; sequence ANDK. Residues 240–260 form a helical membrane-spanning segment; sequence LWFWLEVNSVVDFFTVPPVFV. The Extracellular portion of the chain corresponds to 261-264; it reads SVYL. The chain crosses the membrane as a helical; Voltage-sensor span at residues 265-285; it reads NRSWLGLRFLRALRLIQFSEI. Topologically, residues 286-300 are cytoplasmic; the sequence is LQFLNILKTSNSIKL. The helical transmembrane segment at 301 to 321 threads the bilayer; that stretch reads VNLLSIFISTWLTAAGFIHLV. The Extracellular portion of the chain corresponds to 322-335; the sequence is ENSGDPWENFQNNQ. Positions 336 to 358 form an intramembrane region, pore-forming; sequence ALTYWECVYLLMVTMSTVGYGDV. A Selectivity for potassium motif is present at residues 352–355; the sequence is TVGY. The Extracellular portion of the chain corresponds to 359–367; the sequence is YAKTTLGRL. A helical transmembrane segment spans residues 368-388; that stretch reads FMVFFILGGLAMFASYVPEII. Over 389-1209 the chain is Cytoplasmic; that stretch reads ELIGNRKKYG…KQNRKEMVYR (821 aa). An RCK N-terminal 1 domain is found at 407-549; that stretch reads RKHIVVCGHI…WNWKEGDDAI (143 aa). Residues Glu-439, Gln-462, and Glu-464 each contribute to the Mg(2+) site. The interval 556–576 is segment S7; it reads LGFIAQSCLAQGLSTMLANLF. The tract at residues 613–633 is segment S8; the sequence is LSFPTVCELCFVKLKLLMIAI. Asp-670 carries the phosphothreonine modification. Phosphoserine is present on Lys-672. The interval 681-685 is heme-binding motif; that stretch reads CKACH. Residues 703–733 are disordered; that stretch reads EDEQPPTLSPKKKQRNGGMRNSPNTSPKLMR. Thr-709 carries the post-translational modification Phosphothreonine. Phosphoserine is present on residues Ser-711, Ser-724, and Ser-728. Residues 783–803 are segment S9; the sequence is VLSGHVVVCIFGDVSSALIGL. The 145-residue stretch at 785–929 folds into the RCK N-terminal 2 domain; the sequence is SGHVVVCIFG…MDRSSPDNSP (145 aa). Thr-916 carries the phosphothreonine modification. 2 positions are modified to phosphoserine: Ser-924 and Ser-928. Residues 976–998 carry the Calcium bowl motif; sequence TELVNDTNVQFLDQDDDDDPDTE. 4 residues coordinate Ca(2+): Gln-985, Asp-988, Asp-991, and Asp-993. The segment S10 stretch occupies residues 1005-1025; that stretch reads FACGTAFAVSVLDSLMSATYF. Residues 1159–1184 are compositionally biased toward low complexity; the sequence is RASLSHSSHSSQSSSKKSSSVHSIPS. The disordered stretch occupies residues 1159–1209; sequence RASLSHSSHSSQSSSKKSSSVHSIPSTANRPNRPKSRESRDKQNRKEMVYR. The segment covering 1193 to 1209 has biased composition (basic and acidic residues); that stretch reads KSRESRDKQNRKEMVYR. A phosphoserine mark is found at Ser-1194 and Ser-1197.

The protein belongs to the potassium channel family. Calcium-activated (TC 1.A.1.3) subfamily. KCa1.1/KCNMA1 sub-subfamily. As to quaternary structure, homotetramer; which constitutes the calcium-activated potassium channel. Interacts with beta subunits KCNMB1, KCNMB2, KCNMB3 and KCNMB4. Interacts with gamma subunits LRRC26, LRRC38, LRRC52 and LRRC55. Beta and gamma subunits are accessory, and modulate its activity. Interacts with RAB11B. Phosphorylated. Phosphorylation by kinases such as PKA and/or PKG. In smooth muscles, phosphorylation affects its activity. In terms of processing, palmitoylation by ZDHHC22 and ZDHHC23 within the intracellular linker between the S0 and S1 transmembrane domains regulates localization to the plasma membrane. Depalmitoylated by LYPLA1 and LYPLAL1, leading to retard exit from the trans-Golgi network.

It is found in the cell membrane. It carries out the reaction K(+)(in) = K(+)(out). Its activity is regulated as follows. Ethanol and carbon monoxide-bound heme increase channel activation. Heme inhibits channel activation. In terms of biological role, potassium channel activated by both membrane depolarization or increase in cytosolic Ca(2+) that mediates export of K(+). It is also activated by the concentration of cytosolic Mg(2+). Its activation dampens the excitatory events that elevate the cytosolic Ca(2+) concentration and/or depolarize the cell membrane. It therefore contributes to repolarization of the membrane potential. Plays a key role in controlling excitability in a number of systems, such as regulation of the contraction of smooth muscle, the tuning of hair cells in the cochlea, regulation of transmitter release, and innate immunity. In smooth muscles, its activation by high level of Ca(2+), caused by ryanodine receptors in the sarcoplasmic reticulum, regulates the membrane potential. In cochlea cells, its number and kinetic properties partly determine the characteristic frequency of each hair cell and thereby helps to establish a tonotopic map. Kinetics of KCNMA1 channels are determined by alternative splicing, phosphorylation status and its combination with modulating beta subunits. Highly sensitive to both iberiotoxin (IbTx) and charybdotoxin (CTX). Potassium channel activated by both membrane depolarization or increase in cytosolic Ca(2+) that mediates export of K(+). The protein is Calcium-activated potassium channel subunit alpha-1 (Kcnma1) of Mus musculus (Mouse).